Here is a 70-residue protein sequence, read N- to C-terminus: Small ribosomal subunit protein bS21 (70 aa).

Belongs to the bacterial ribosomal protein bS21 family.

This Herminiimonas arsenicoxydans protein is Small ribosomal subunit protein bS21.